Consider the following 194-residue polypeptide: Small ribosomal subunit protein eS7 (194 aa).

Belongs to the eukaryotic ribosomal protein eS7 family.

The polypeptide is Small ribosomal subunit protein eS7 (RpS7) (Drosophila melanogaster (Fruit fly)).